Here is a 407-residue protein sequence, read N- to C-terminus: Multifunctional CCA protein (407 aa).

Residues G8 and R11 each contribute to the ATP site. CTP contacts are provided by G8 and R11. The Mg(2+) site is built by D21 and D23. 3 residues coordinate ATP: R91, R137, and R140. CTP is bound by residues R91, R137, and R140. Positions 228-329 (TGMHTLMVSQ…IKIFDKMDLW (102 aa)) constitute an HD domain.

The protein belongs to the tRNA nucleotidyltransferase/poly(A) polymerase family. Bacterial CCA-adding enzyme type 1 subfamily. Monomer. Can also form homodimers and oligomers. The cofactor is Mg(2+). Requires Ni(2+) as cofactor.

It carries out the reaction a tRNA precursor + 2 CTP + ATP = a tRNA with a 3' CCA end + 3 diphosphate. The catalysed reaction is a tRNA with a 3' CCA end + 2 CTP + ATP = a tRNA with a 3' CCACCA end + 3 diphosphate. Functionally, catalyzes the addition and repair of the essential 3'-terminal CCA sequence in tRNAs without using a nucleic acid template. Adds these three nucleotides in the order of C, C, and A to the tRNA nucleotide-73, using CTP and ATP as substrates and producing inorganic pyrophosphate. tRNA 3'-terminal CCA addition is required both for tRNA processing and repair. Also involved in tRNA surveillance by mediating tandem CCA addition to generate a CCACCA at the 3' terminus of unstable tRNAs. While stable tRNAs receive only 3'-terminal CCA, unstable tRNAs are marked with CCACCA and rapidly degraded. The sequence is that of Multifunctional CCA protein from Aliivibrio salmonicida (strain LFI1238) (Vibrio salmonicida (strain LFI1238)).